Here is a 420-residue protein sequence, read N- to C-terminus: Serine hydroxymethyltransferase (420 aa).

Residues leucine 121 and 125–127 contribute to the (6S)-5,6,7,8-tetrahydrofolate site; that span reads GHL. N6-(pyridoxal phosphate)lysine is present on lysine 230. Position 355–357 (355–357) interacts with (6S)-5,6,7,8-tetrahydrofolate; the sequence is SPF.

The protein belongs to the SHMT family. In terms of assembly, homodimer. Pyridoxal 5'-phosphate serves as cofactor.

The protein resides in the cytoplasm. The enzyme catalyses (6R)-5,10-methylene-5,6,7,8-tetrahydrofolate + glycine + H2O = (6S)-5,6,7,8-tetrahydrofolate + L-serine. It participates in one-carbon metabolism; tetrahydrofolate interconversion. Its pathway is amino-acid biosynthesis; glycine biosynthesis; glycine from L-serine: step 1/1. Its function is as follows. Catalyzes the reversible interconversion of serine and glycine with tetrahydrofolate (THF) serving as the one-carbon carrier. This reaction serves as the major source of one-carbon groups required for the biosynthesis of purines, thymidylate, methionine, and other important biomolecules. Also exhibits THF-independent aldolase activity toward beta-hydroxyamino acids, producing glycine and aldehydes, via a retro-aldol mechanism. In Streptococcus mutans serotype c (strain ATCC 700610 / UA159), this protein is Serine hydroxymethyltransferase.